Reading from the N-terminus, the 337-residue chain is Ribosomal RNA small subunit methyltransferase H (337 aa).

S-adenosyl-L-methionine-binding positions include 36–38 (GGH), Asp56, Phe82, Asp100, and Gln107. Residues 314–337 (GLERRSGRIPNPRSPIPASQGDAR) are disordered.

It belongs to the methyltransferase superfamily. RsmH family.

It is found in the cytoplasm. The enzyme catalyses cytidine(1402) in 16S rRNA + S-adenosyl-L-methionine = N(4)-methylcytidine(1402) in 16S rRNA + S-adenosyl-L-homocysteine + H(+). Its function is as follows. Specifically methylates the N4 position of cytidine in position 1402 (C1402) of 16S rRNA. The protein is Ribosomal RNA small subunit methyltransferase H of Xanthomonas oryzae pv. oryzae (strain PXO99A).